The primary structure comprises 127 residues: Protein pkiA (127 aa).

The region spanning 16 to 127 is the HIT domain; the sequence is IFAKIISGAI…GGRQMNWPPG (112 aa).

This is Protein pkiA (pkiA) from Dictyostelium discoideum (Social amoeba).